Reading from the N-terminus, the 215-residue chain is MFITFEGMEGSGKSTALNRVQQVLLDAGHGVLLTREPGGSRLGRTLRSILLDLSNDDIVPEAELFLYLADRAQHVGQVIRPALDEGVVVLSDRYADSTVVYQGYGRGLDPERLRELNDMAVGGLWPDLTLVFDLPPEEGLRRAMTRNLREGTSVSEGRFEAEHLAFHARVREGYLTWAALHPARFRVVDATRTPDEVFEDVMRAVRSVLSAPARP.

7-14 (GMEGSGKS) contacts ATP.

This sequence belongs to the thymidylate kinase family.

It carries out the reaction dTMP + ATP = dTDP + ADP. Phosphorylation of dTMP to form dTDP in both de novo and salvage pathways of dTTP synthesis. In Nitratidesulfovibrio vulgaris (strain DSM 19637 / Miyazaki F) (Desulfovibrio vulgaris), this protein is Thymidylate kinase.